The sequence spans 290 residues: PIH1 domain-containing protein 1 (290 aa).

Residues Ser12 and Ser173 each carry the phosphoserine modification.

Belongs to the PIH1 family. As to quaternary structure, component of the R2TP complex composed at least of RUVBL1, RUVBL2, RPAP3 and PIHD1. Component of the PAQosome complex which is responsible for the biogenesis of several protein complexes and which consists of R2TP complex members RUVBL1, RUVBL2, RPAP3 and PIH1D1, URI complex members PFDN2, PFDN6, PDRG1, UXT and URI1 as well as ASDURF, POLR2E and DNAAF10/WDR92. Interacts with phosphorylated TELO2 and mediates interaction of TELO2 with the R2TP complex. Interacts with phosphorylated ECD, EFTUD2/SNRP116, RPB1 and UBR5 and with RPB1 in a phosphorylation-independent manner. Interacts with the core C/D box snoRNP particle components NOP58 and FBL and with RUVBL1/TIP49. Interacts with RPAP3 and DNAAF10. Interacts with histone H4 and with SWI/SNF complex member SMARCB1/SNF5. Interacts with the mTORC1 complex member RPTOR. Interacts with MSL1. Expressed at low levels in normal mammary epithelial cells (at protein level). Highest expression in lung, leukocyte and placenta. Expressed at lower levels in brain, prostate, colon, heart, small intestine, liver, ovary, pancreas, skeletal muscle, spleen, testis and thymus.

Its subcellular location is the nucleus. Involved in the assembly of C/D box small nucleolar ribonucleoprotein (snoRNP) particles. Recruits the SWI/SNF complex to the core promoter of rRNA genes and enhances pre-rRNA transcription. Mediates interaction of TELO2 with the R2TP complex which is necessary for the stability of MTOR and SMG1. Positively regulates the assembly and activity of the mTORC1 complex. This is PIH1 domain-containing protein 1 (PIH1D1) from Homo sapiens (Human).